Here is a 408-residue protein sequence, read N- to C-terminus: Serine/threonine transporter SstT (408 aa).

A run of 9 helical transmembrane segments spans residues 11 to 31 (LANG…VALA), 43 to 63 (FLGS…VFIL), 82 to 102 (IVVL…ILSM), 141 to 161 (ALMT…GLAL), 192 to 212 (IGIF…AIAG), 216 to 236 (LLAV…PLIV), 290 to 310 (IPLG…VLTL), 316 to 336 (LGIQ…AISA), and 363 to 383 (VAMQ…AAET).

It belongs to the dicarboxylate/amino acid:cation symporter (DAACS) (TC 2.A.23) family.

The protein localises to the cell inner membrane. It catalyses the reaction L-serine(in) + Na(+)(in) = L-serine(out) + Na(+)(out). The enzyme catalyses L-threonine(in) + Na(+)(in) = L-threonine(out) + Na(+)(out). Functionally, involved in the import of serine and threonine into the cell, with the concomitant import of sodium (symport system). In Shewanella oneidensis (strain ATCC 700550 / JCM 31522 / CIP 106686 / LMG 19005 / NCIMB 14063 / MR-1), this protein is Serine/threonine transporter SstT.